Here is a 382-residue protein sequence, read N- to C-terminus: Sulfate adenylyltransferase (382 aa).

Belongs to the sulfate adenylyltransferase family.

The enzyme catalyses sulfate + ATP + H(+) = adenosine 5'-phosphosulfate + diphosphate. It functions in the pathway sulfur metabolism; hydrogen sulfide biosynthesis; sulfite from sulfate: step 1/3. This Ignicoccus hospitalis (strain KIN4/I / DSM 18386 / JCM 14125) protein is Sulfate adenylyltransferase.